We begin with the raw amino-acid sequence, 482 residues long: Keratin, type I cytoskeletal 39 (482 aa).

Positions 1 to 24 are disordered; the sequence is MDTKGSTVTISSSTPPQNCSGNTN. The interval 1-91 is head; the sequence is MDTKGSTVTI…RCTEGINTHE (91 aa). The 312-residue stretch at 91 to 402 folds into the IF rod domain; sequence EKETMQILNE…SLLESLDGRL (312 aa). The tract at residues 92–126 is coil 1A; the sequence is KETMQILNERLANYLEKVRMLEGENADLEDKIQEA. Residues 127–137 are linker 1; it reads CSKALPILCPD. Residues 138–238 form a coil 1B region; sequence YLSYYTTIEE…HEEEVNSLQC (101 aa). The segment at 239 to 254 is linker 12; it reads QLGDRINIEVTAAPSV. Positions 255 to 398 are coil 2; that stretch reads DLNQILQEMR…ATYRSLLESL (144 aa). The tail stretch occupies residues 399 to 482; the sequence is DGRLPCNPCA…PCYITRATKV (84 aa).

This sequence belongs to the intermediate filament family. As to quaternary structure, heterotetramer of two type I and two type II keratins.

In terms of biological role, may play a role in late hair differentiation. The sequence is that of Keratin, type I cytoskeletal 39 (Krt39) from Mus musculus (Mouse).